Here is a 350-residue protein sequence, read N- to C-terminus: MMKVRPVERRDLADIFELAGKTGVGMTSLPQNEQHLAARIERALNTWQGSLDPGEQGYLFVLEDSEQQKVVGVSAIEVAVGLNDPWYNFRVGTLVHASKALNVYKSVPTLFLSNDHTGYSELCTLFLDPDYRKDKNGPFLSKVRFLFIAAFRQYFSRKVIAEMRGYTDEQGRSPFWESVGRHFFSIEFAKADYLSGTGQKAFIAELMPKHPLYVDFLAEEARAVIGQVHPHTAPARAVLETEGLQYQGYVDIFDGGPTLEANTDDVRVVRDSSKRTVVIKDYDIEDYDIDPNGRLYLVANDHYHHFRAILMNTHLSDERLRLTPESAEALGVAAGDSVRIVSLFAPETKR.

Succinyl-CoA is bound at residue Leu125. His229 serves as the catalytic Proton donor.

It belongs to the arginine N-succinyltransferase family.

It catalyses the reaction succinyl-CoA + L-arginine = N(2)-succinyl-L-arginine + CoA + H(+). Its pathway is amino-acid degradation; L-arginine degradation via AST pathway; L-glutamate and succinate from L-arginine: step 1/5. Functionally, catalyzes the transfer of succinyl-CoA to arginine to produce N(2)-succinylarginine. The protein is Arginine N-succinyltransferase of Yersinia pestis.